The sequence spans 253 residues: Testis-expressed protein 47 (253 aa).

The sequence is that of Testis-expressed protein 47 (Tex47) from Mus musculus (Mouse).